A 264-amino-acid chain; its full sequence is Indole-3-glycerol phosphate synthase (264 aa).

The protein belongs to the TrpC family.

It catalyses the reaction 1-(2-carboxyphenylamino)-1-deoxy-D-ribulose 5-phosphate + H(+) = (1S,2R)-1-C-(indol-3-yl)glycerol 3-phosphate + CO2 + H2O. The protein operates within amino-acid biosynthesis; L-tryptophan biosynthesis; L-tryptophan from chorismate: step 4/5. This is Indole-3-glycerol phosphate synthase from Xylella fastidiosa (strain M12).